Consider the following 349-residue polypeptide: Anthranilate phosphoribosyltransferase (349 aa).

5-phospho-alpha-D-ribose 1-diphosphate contacts are provided by residues glycine 84, 87 to 88 (GD), threonine 92, 94 to 97 (NIST), 112 to 120 (KHGNRAASS), and serine 124. Glycine 84 contributes to the anthranilate binding site. Position 96 (serine 96) interacts with Mg(2+). An anthranilate-binding site is contributed by asparagine 115. Arginine 170 provides a ligand contact to anthranilate. The Mg(2+) site is built by aspartate 228 and glutamate 229.

Belongs to the anthranilate phosphoribosyltransferase family. In terms of assembly, homodimer. Mg(2+) is required as a cofactor.

The catalysed reaction is N-(5-phospho-beta-D-ribosyl)anthranilate + diphosphate = 5-phospho-alpha-D-ribose 1-diphosphate + anthranilate. It functions in the pathway amino-acid biosynthesis; L-tryptophan biosynthesis; L-tryptophan from chorismate: step 2/5. Catalyzes the transfer of the phosphoribosyl group of 5-phosphorylribose-1-pyrophosphate (PRPP) to anthranilate to yield N-(5'-phosphoribosyl)-anthranilate (PRA). The chain is Anthranilate phosphoribosyltransferase from Leifsonia xyli subsp. xyli (strain CTCB07).